Reading from the N-terminus, the 519-residue chain is tRNA pseudouridine synthase Pus10 (519 aa).

The interval 70–98 is disordered; it reads NENEEIDENTKNNEDTENKADDKSQSNEE. Over residues 77 to 98 the composition is skewed to basic and acidic residues; it reads ENTKNNEDTENKADDKSQSNEE. Residues 144 to 265 enclose the THUMP domain; sequence NESEENESNI…NQKIYLQINP (122 aa). Asp-334 (nucleophile) is an active-site residue. Residues Tyr-398 and Tyr-476 each coordinate substrate.

It belongs to the pseudouridine synthase Pus10 family.

The enzyme catalyses uridine(54) in tRNA = pseudouridine(54) in tRNA. The catalysed reaction is uridine(55) in tRNA = pseudouridine(55) in tRNA. In terms of biological role, responsible for synthesis of pseudouridine from uracil-54 and uracil-55 in the psi GC loop of transfer RNAs. This chain is tRNA pseudouridine synthase Pus10, found in Methanococcus voltae (strain ATCC BAA-1334 / A3).